The sequence spans 1418 residues: Alpha-latrotoxin-Lhe1a (1418 aa).

Positions 1 to 20 (MIFVGETMERANHSLVRLRR) are cleaved as a signal peptide. A furin-like endopeptidase recognition region region spans residues 17 to 20 (RLRR). The tract at residues 238–257 (VLYALLYGTQTYISVMFFLL) is helix H8 is the probable transmembrane region of the tetrameric pore inserted in the target cell membrane. A disulfide bridge connects residues Cys413 and Cys1066. ANK repeat units lie at residues 458-489 (LYNAASNPDSAVGFKEFTKLNYDGANIRATFD), 490-521 (QGRTIFHAVAKSGNDKILFGLTFLVKSTELNQ), 525-554 (KGYTPIHVAADSGNAGIVNLLIQRGVSINS), 559-589 (FLQTPLHLAAQRGFVNTFQRLMESSEININE), 593-622 (DGFTPLHYAVRGGERILEAFMNQIGIDVNA), 626-656 (KGLTPFHLAIIKNDWQVASTLLRNKKVDINA), 660-690 (NNMTALHYAAILGYLETTKQLINLKEINANV), 695-723 (GLLSALHYAILYKHDDVASFLLRSSNVNV), 729-758 (GGITPLHLAVMQGRKQVLSLMFNIGVNIEQ), 762-791 (EKYTPLHLAAMSKYPELIQILLDQDSNFEA), 795-824 (SGATPLHLATFKGKSQAALILLNNEVNWRD), 828-857 (NGQMPIHGAATTGLLDVAQAIISIDATVLD), 862-891 (NSDTPLNLAAQNSHIDAVKYFIDQGADINT), 895-924 (NGHAPLLAFSKKGNLDMVKYLFDKNANVYI), 928-957 (NGMNFFYYAVRNGHLNIIKYAMSEKDKFEW), 971-1003 (EECAISHFAVCDAVQFDKIEIVKFFIGTLGNFN), 1004-1033 (ICGPLHQAARYGHLHIVKYLVEEEVLSVDG), 1035-1064 (KTDTPLCYASENGHLAVVQYLVSNGAKVNH), 1068-1097 (NGMTAIDKAITKNHLQVVQFLAANGVDFRR), 1101-1131 (RGATPFLTAVAENAFDIAEYLIREKRQDINI), 1137-1166 (DKETALHLAVYYKNLQMIKLLVKYGIDVTI), and 1170-1199 (YDKTVLDIATDAKFSNIVKYLKKNSGKFRR). The segment at 1026-1032 (EEVLSVD) is 4C4.1 epitope. The tract at residues 1196–1199 (KFRR) is furin-like endopeptidase recognition region. Residues 1200–1418 (EYKSSYGEHS…SEKKIQKISI (219 aa)) constitute a propeptide that is removed on maturation.

This sequence belongs to the cationic peptide 01 (latrotoxin) family. 03 (alpha-latrotoxin) subfamily. As to quaternary structure, homotetramer in membranes. Post-translationally, processed by furin-like proteases at both the N- and C-termini. Expressed in venom gland, cephalothorax, and abdomen tissues from both males and females.

The protein localises to the secreted. It localises to the target cell membrane. In terms of biological role, presynaptic neurotoxin that causes massive release of neurotransmitters from vertebrate (but not invertebrate) nerve terminals and endocrine cells via a complex mechanism involving activation of receptor(s) and toxin insertion into the plasma membrane with subsequent pore formation. Binds to neurexin-1-alpha (NRXN1) in a calcium dependent manner, adhesion G protein-coupled receptor L1 (ADGRL1, also termed latrophilin-1 and calcium-independent receptor of latrotoxin (CIRL)), and receptor-type tyrosine-protein phosphatase S (PTPRS), also termed PTP sigma. NRXN1 and PTPRS are suggested to provide a platform for binding and subsequent pore formation events. In contrast, binding to ADGRL1 does not involve oligomerization and channel formation, but direct downstream stimulation of the synaptic fusion machinery. The chain is Alpha-latrotoxin-Lhe1a from Latrodectus hesperus (Western black widow spider).